Consider the following 928-residue polypeptide: MEGDGVPWGSEPESGPGPGGGGVIRELCRGFGRYRRYLGRLRQNLRDTQKFFRDLRGSQPRGCPSSPAEGGEAGRGPAGDVAATGLPAGQLSCISFPPKEEKRLQQMVDCLPCILILGQDCSVKCQLLNLLLGVQVLPTNKLGGENCKLRRLRFTYGTQTRVSLALPDRYELVHTLAAHQGTWETVPEEDLEAREDSEDAARVLAELEVTMRHALLQEVDIVVAPCQGLRPTVDVLSDLVNDFLPVITYALHKDELSERDEQELQEIRKYFSFPIFFFKVPKLGSEIIDSSTERMESERSPLHRQLTDLGYLSSSLCNCGAPGQDTKAQSMLVEQSEKLRHLNTFSHQVLQTRLVDAAKALNLVHCRCLDIFINQAFDMQRDLQITPKRLEYTRKKENELYESLMNIANRKQEEMKDMIVETLNTMKEELLDDAANMEFKDVIVPENGEPVGTREIKCCIRQIQELIISRLNQAVANKLISSVDYLRESFVGTLERCLQSLEKSQDVSVHITSNYLKQILNAAYHVEVTFHSGSSVTRMLWEQIKQIIQRITWVSPPAITLEWKRKVAQEAIESLSASKLAKSICSQFRTRLNSSHEAFAASLRQLEAGHSGRLEKTEDLWLKVRKDHAPRLARLSLESRSLQDVLLHRKPKLGQELGRGQYGVVYLCDSWGGHFPCALKSVVPPDEKHWNDLALEFHYMRSLPKHERLVDLHGSVIDYSYGGGSSIAVLLIMERLHRDLYTGLKAGLALETRLQIALDVVEGIRFLHSQGLVHRDVKLKNVLLDKQNRAKITDLGFCKPEAMMSGSIVGTPIHMAPELFTGKYDNSVDVYAFGILFWYICSGSVKLPEAFERCASKDHLWNNVRRGARPERLPVFDEECWQLMEACWDGDPSQRPLLGIVQPMLQGIMDRLCKSHSERPNRGLDDST.

The span at methionine 1–serine 14 shows a compositional bias: low complexity. Disordered regions lie at residues methionine 1–glycine 22 and leucine 55–valine 81. The stretch at arginine 394–leucine 430 forms a coiled coil. The 255-residue stretch at proline 651–leucine 905 folds into the Protein kinase domain. ATP contacts are provided by residues leucine 657–valine 665 and lysine 680. Aspartate 776 (proton acceptor) is an active-site residue.

This sequence belongs to the protein kinase superfamily. Ser/Thr protein kinase family.

The protein localises to the cytoplasm. It is found in the cell membrane. Its subcellular location is the apical cell membrane. It localises to the basolateral cell membrane. The protein resides in the cell junction. The catalysed reaction is L-seryl-[protein] + ATP = O-phospho-L-seryl-[protein] + ADP + H(+). It catalyses the reaction L-threonyl-[protein] + ATP = O-phospho-L-threonyl-[protein] + ADP + H(+). The enzyme catalyses L-tyrosyl-[protein] + ATP = O-phospho-L-tyrosyl-[protein] + ADP + H(+). Its function is as follows. Acts as a positive regulator of ERK phosphorylation downstream of fibroblast growth factor-receptor activation. Involved in the regulation of both caspase-dependent apoptosis and caspase-independent cell death. In the skin, it plays a predominant role in suppressing caspase-dependent apoptosis in response to UV stress in a range of dermal cell types. The chain is Dual serine/threonine and tyrosine protein kinase (DSTYK) from Bos taurus (Bovine).